Reading from the N-terminus, the 156-residue chain is Transcriptional repressor NrdR (156 aa).

The segment at 3 to 34 (CPKCSSTHSRVVDSRHADDANAIRRRRECENC) is a zinc-finger region. The region spanning 49 to 139 (LIVVKKDGTR…VYKEFKDVDQ (91 aa)) is the ATP-cone domain.

The protein belongs to the NrdR family. Zn(2+) is required as a cofactor.

In terms of biological role, negatively regulates transcription of bacterial ribonucleotide reductase nrd genes and operons by binding to NrdR-boxes. In Staphylococcus haemolyticus (strain JCSC1435), this protein is Transcriptional repressor NrdR.